A 136-amino-acid chain; its full sequence is Large ribosomal subunit protein uL16 (136 aa).

The protein belongs to the universal ribosomal protein uL16 family. In terms of assembly, part of the 50S ribosomal subunit.

Functionally, binds 23S rRNA and is also seen to make contacts with the A and possibly P site tRNAs. The protein is Large ribosomal subunit protein uL16 of Shewanella pealeana (strain ATCC 700345 / ANG-SQ1).